We begin with the raw amino-acid sequence, 99 residues long: Gibberellin-regulated protein 3 (99 aa).

A signal peptide spans 1-26 (MAIFRSTLVLLLILFCLTTFELHVHA).

The protein belongs to the GASA family. Six disulfide bonds may be present. Expressed in siliques, dry seeds and vasculature of roots and rosette leaves.

It is found in the secreted. Its function is as follows. Gibberellin-regulated protein that may function in hormonal controlled steps of development such as seed germination, flowering and seed maturation. This Arabidopsis thaliana (Mouse-ear cress) protein is Gibberellin-regulated protein 3 (GASA3).